We begin with the raw amino-acid sequence, 360 residues long: Phospho-N-acetylmuramoyl-pentapeptide-transferase (360 aa).

Helical transmembrane passes span 27-47, 70-90, 98-118, 134-154, 168-188, 199-219, 239-259, 263-283, 288-308, and 337-357; these read GALF…ISLL, GTPT…ILLW, VWVT…DDYL, LLLE…YSPA, TLLN…VGAG, GLAI…AYLV, LAVV…FNAP, IFMG…IAVA, IVLA…IIQV, and QVVI…LATL.

It belongs to the glycosyltransferase 4 family. MraY subfamily. Requires Mg(2+) as cofactor.

It localises to the cell inner membrane. It catalyses the reaction UDP-N-acetyl-alpha-D-muramoyl-L-alanyl-gamma-D-glutamyl-meso-2,6-diaminopimeloyl-D-alanyl-D-alanine + di-trans,octa-cis-undecaprenyl phosphate = di-trans,octa-cis-undecaprenyl diphospho-N-acetyl-alpha-D-muramoyl-L-alanyl-D-glutamyl-meso-2,6-diaminopimeloyl-D-alanyl-D-alanine + UMP. Its pathway is cell wall biogenesis; peptidoglycan biosynthesis. Its function is as follows. Catalyzes the initial step of the lipid cycle reactions in the biosynthesis of the cell wall peptidoglycan: transfers peptidoglycan precursor phospho-MurNAc-pentapeptide from UDP-MurNAc-pentapeptide onto the lipid carrier undecaprenyl phosphate, yielding undecaprenyl-pyrophosphoryl-MurNAc-pentapeptide, known as lipid I. This is Phospho-N-acetylmuramoyl-pentapeptide-transferase from Methylorubrum extorquens (strain CM4 / NCIMB 13688) (Methylobacterium extorquens).